A 376-amino-acid chain; its full sequence is Thymidine kinase (376 aa).

Positions 1-39 are disordered; the sequence is MASYPCHQHASAFDQAARSRGHSNRRTALRPRRQQEATE. Positions 19–32 are enriched in basic residues; it reads SRGHSNRRTALRPR. Position 56–63 (56–63) interacts with ATP; that stretch reads GPHGMGKT. Glu83 acts as the Proton acceptor in catalysis. Substrate-binding residues include Tyr101 and Gln125. ATP is bound at residue Arg216. Residue Arg222 coordinates substrate. The disordered stretch occupies residues 260-280; it reads GQLSGTAVPPQGAEPQSNAGP.

It belongs to the herpesviridae thymidine kinase family. In terms of assembly, homodimer.

The enzyme catalyses thymidine + ATP = dTMP + ADP + H(+). Functionally, catalyzes the transfer of the gamma-phospho group of ATP to thymidine to generate dTMP in the salvage pathway of pyrimidine synthesis. The dTMP serves as a substrate for DNA polymerase during viral DNA replication. Allows the virus to be reactivated and to grow in non-proliferative cells lacking a high concentration of phosphorylated nucleic acid precursors. This Human herpesvirus 1 (strain KOS) (HHV-1) protein is Thymidine kinase.